The sequence spans 308 residues: MNQRSARSVLSRSGVVLVDKPSGPTSHDMVAKLRRIMGTRRIGHSGTLDPMATGLLVVGVERGTKFLAHVVTHDKRYEATVRLGVATHTDDAQGDVLSTASPQDLQALTEQQVREAFAAQRGDIMQRPTSVSSIKIDGKRAHELVREGHDVVLPERPVTIFSLEVLDVVVDDATSCIDARISVHCSSGTYIRAIARDVGEALGVGGHLTQLRRTSVGPFDVSEARTLEQLEEDPSLTLNLDEAMVRCFDTREISESEGVDLSLGKWLKPVGNKGVRAAVTPSGQAIALVEEKGKRASSVFVARPAGMD.

Asp-49 (nucleophile) is an active-site residue.

This sequence belongs to the pseudouridine synthase TruB family. Type 1 subfamily.

It carries out the reaction uridine(55) in tRNA = pseudouridine(55) in tRNA. Functionally, responsible for synthesis of pseudouridine from uracil-55 in the psi GC loop of transfer RNAs. In Corynebacterium jeikeium (strain K411), this protein is tRNA pseudouridine synthase B.